The sequence spans 96 residues: Small ribosomal subunit protein bS18 (96 aa).

This sequence belongs to the bacterial ribosomal protein bS18 family. As to quaternary structure, part of the 30S ribosomal subunit. Forms a tight heterodimer with protein bS6.

Its function is as follows. Binds as a heterodimer with protein bS6 to the central domain of the 16S rRNA, where it helps stabilize the platform of the 30S subunit. The protein is Small ribosomal subunit protein bS18 of Gluconobacter oxydans (strain 621H) (Gluconobacter suboxydans).